We begin with the raw amino-acid sequence, 188 residues long: Shikimate kinase (188 aa).

Residue 21–26 (GAGKTT) participates in ATP binding. Thr25 serves as a coordination point for Mg(2+). The substrate site is built by Asp43, Arg67, and Gly90. Arg130 contacts ATP. Arg148 serves as a coordination point for substrate.

It belongs to the shikimate kinase family. As to quaternary structure, monomer. The cofactor is Mg(2+).

It is found in the cytoplasm. The catalysed reaction is shikimate + ATP = 3-phosphoshikimate + ADP + H(+). It functions in the pathway metabolic intermediate biosynthesis; chorismate biosynthesis; chorismate from D-erythrose 4-phosphate and phosphoenolpyruvate: step 5/7. Functionally, catalyzes the specific phosphorylation of the 3-hydroxyl group of shikimic acid using ATP as a cosubstrate. The polypeptide is Shikimate kinase (Geobacillus kaustophilus (strain HTA426)).